The primary structure comprises 238 residues: Lactate utilization protein A (238 aa).

It belongs to the LutA/YkgE family.

Functionally, is involved in L-lactate degradation and allows cells to grow with lactate as the sole carbon source. The chain is Lactate utilization protein A from Bacillus pumilus (strain SAFR-032).